The following is a 127-amino-acid chain: Ribonuclease P protein component (127 aa).

The interval 99–127 is disordered; it reads ALSASLRQQLRDGIDRSARRQEPAAERQR. A compositionally biased stretch (basic and acidic residues) spans 107–127; it reads QLRDGIDRSARRQEPAAERQR.

This sequence belongs to the RnpA family. In terms of assembly, consists of a catalytic RNA component (M1 or rnpB) and a protein subunit.

The enzyme catalyses Endonucleolytic cleavage of RNA, removing 5'-extranucleotides from tRNA precursor.. Its function is as follows. RNaseP catalyzes the removal of the 5'-leader sequence from pre-tRNA to produce the mature 5'-terminus. It can also cleave other RNA substrates such as 4.5S RNA. The protein component plays an auxiliary but essential role in vivo by binding to the 5'-leader sequence and broadening the substrate specificity of the ribozyme. In Mycobacteroides abscessus (strain ATCC 19977 / DSM 44196 / CCUG 20993 / CIP 104536 / JCM 13569 / NCTC 13031 / TMC 1543 / L948) (Mycobacterium abscessus), this protein is Ribonuclease P protein component.